Here is a 193-residue protein sequence, read N- to C-terminus: dCTP deaminase (193 aa).

DCTP is bound by residues 110–115 (RSSLAR), Asp-128, 136–138 (VLE), Tyr-171, Lys-178, and Gln-182. Glu-138 acts as the Proton donor/acceptor in catalysis.

It belongs to the dCTP deaminase family. Homotrimer.

The catalysed reaction is dCTP + H2O + H(+) = dUTP + NH4(+). It functions in the pathway pyrimidine metabolism; dUMP biosynthesis; dUMP from dCTP (dUTP route): step 1/2. In terms of biological role, catalyzes the deamination of dCTP to dUTP. This is dCTP deaminase from Aeromonas hydrophila subsp. hydrophila (strain ATCC 7966 / DSM 30187 / BCRC 13018 / CCUG 14551 / JCM 1027 / KCTC 2358 / NCIMB 9240 / NCTC 8049).